The chain runs to 119 residues: Protein TusC (119 aa).

It belongs to the DsrF/TusC family. In terms of assembly, heterohexamer, formed by a dimer of trimers. The hexameric TusBCD complex contains 2 copies each of TusB, TusC and TusD. The TusBCD complex interacts with TusE.

Its subcellular location is the cytoplasm. Its function is as follows. Part of a sulfur-relay system required for 2-thiolation of 5-methylaminomethyl-2-thiouridine (mnm(5)s(2)U) at tRNA wobble positions. The sequence is that of Protein TusC from Klebsiella pneumoniae subsp. pneumoniae (strain ATCC 700721 / MGH 78578).